Reading from the N-terminus, the 270-residue chain is tRNA pseudouridine synthase A (270 aa).

Asp60 functions as the Nucleophile in the catalytic mechanism. Residue Tyr118 coordinates substrate.

The protein belongs to the tRNA pseudouridine synthase TruA family. In terms of assembly, homodimer.

The catalysed reaction is uridine(38/39/40) in tRNA = pseudouridine(38/39/40) in tRNA. Formation of pseudouridine at positions 38, 39 and 40 in the anticodon stem and loop of transfer RNAs. This Salmonella agona (strain SL483) protein is tRNA pseudouridine synthase A.